We begin with the raw amino-acid sequence, 87 residues long: Small ribosomal subunit protein uS17 (87 aa).

This sequence belongs to the universal ribosomal protein uS17 family. As to quaternary structure, part of the 30S ribosomal subunit.

Its function is as follows. One of the primary rRNA binding proteins, it binds specifically to the 5'-end of 16S ribosomal RNA. The sequence is that of Small ribosomal subunit protein uS17 from Staphylococcus aureus (strain Mu3 / ATCC 700698).